We begin with the raw amino-acid sequence, 340 residues long: Selenide, water dikinase (340 aa).

Residue Cys-13 is part of the active site. Residues Lys-16 and 43–45 (ASD) each bind ATP. Asp-46 lines the Mg(2+) pocket. Residues Asp-63, Asp-86, and 133 to 135 (GHS) each bind ATP. Asp-86 provides a ligand contact to Mg(2+). Residue Asp-221 coordinates Mg(2+).

The protein belongs to the selenophosphate synthase 1 family. Class I subfamily. Homodimer. The cofactor is Mg(2+).

It carries out the reaction hydrogenselenide + ATP + H2O = selenophosphate + AMP + phosphate + 2 H(+). Its function is as follows. Synthesizes selenophosphate from selenide and ATP. This Desulfitobacterium hafniense (strain DSM 10664 / DCB-2) protein is Selenide, water dikinase.